The primary structure comprises 258 residues: Short-chain dehydrogenase reductase 3c (258 aa).

Isoleucine 12–valine 36 lines the NAD(+) pocket. Serine 144 is a substrate binding site. The active-site Proton acceptor is the tyrosine 156.

It belongs to the short-chain dehydrogenases/reductases (SDR) family.

The sequence is that of Short-chain dehydrogenase reductase 3c (SDR3c) from Arabidopsis thaliana (Mouse-ear cress).